A 129-amino-acid polypeptide reads, in one-letter code: UPF0225 protein XOO0258 (129 aa).

The protein belongs to the UPF0225 family.

The chain is UPF0225 protein XOO0258 from Xanthomonas oryzae pv. oryzae (strain MAFF 311018).